The primary structure comprises 202 residues: FMN-dependent NADH:quinone oxidoreductase (202 aa).

Residues S10 and 95 to 98 (MYNF) each bind FMN.

Belongs to the azoreductase type 1 family. Homodimer. It depends on FMN as a cofactor.

It carries out the reaction 2 a quinone + NADH + H(+) = 2 a 1,4-benzosemiquinone + NAD(+). The enzyme catalyses N,N-dimethyl-1,4-phenylenediamine + anthranilate + 2 NAD(+) = 2-(4-dimethylaminophenyl)diazenylbenzoate + 2 NADH + 2 H(+). Quinone reductase that provides resistance to thiol-specific stress caused by electrophilic quinones. Its function is as follows. Also exhibits azoreductase activity. Catalyzes the reductive cleavage of the azo bond in aromatic azo compounds to the corresponding amines. This is FMN-dependent NADH:quinone oxidoreductase from Alkalilimnicola ehrlichii (strain ATCC BAA-1101 / DSM 17681 / MLHE-1).